Reading from the N-terminus, the 1002-residue chain is Isoleucine--tRNA ligase, mitochondrial (1002 aa).

The short motif at 94 to 104 is the 'HIGH' region element; sequence PYANGELHLGH. Positions 668–672 match the 'KMSKS' region motif; the sequence is KMSKS. ATP is bound at residue lysine 671.

Belongs to the class-I aminoacyl-tRNA synthetase family.

The protein localises to the mitochondrion matrix. It catalyses the reaction tRNA(Ile) + L-isoleucine + ATP = L-isoleucyl-tRNA(Ile) + AMP + diphosphate. This Saccharomyces cerevisiae (strain ATCC 204508 / S288c) (Baker's yeast) protein is Isoleucine--tRNA ligase, mitochondrial (ISM1).